The following is a 339-amino-acid chain: MNDFKSIIGKLATGVTLSREESAGAFDAMMSGEATPSQMGALLMALRVRGETVEEITGAVAAMRSKMLRVTAPADAVDVVGTGGDGSGSVNVSTCASFIVAGAGVPVAKHGNRALSSKSGAADVLAALGVKIDITPAEVGRCIKEAGIGFMFAPTHHPAMKNVGPTRVELATRTIFNLLGPLSNPAGVTRQMVGVFSRQWVQPLAQVLKNLGSESAWVVHGSDGLDEITISGPTFVAALADGKITTFEITPEDAGLPRAGADVLKGGDAEANAVALQGVLDGKPSAYRDVALLNAAAALIVGGRANTLKDGVAQGAQALDSGAAAAKLKQLIAVSNAAA.

5-phospho-alpha-D-ribose 1-diphosphate-binding positions include glycine 81, 84–85 (GD), serine 89, 91–94 (NVST), 109–117 (KHGNRALSS), and alanine 121. Glycine 81 serves as a coordination point for anthranilate. Mg(2+) is bound at residue serine 93. Asparagine 112 lines the anthranilate pocket. Arginine 167 lines the anthranilate pocket. Mg(2+)-binding residues include aspartate 226 and glutamate 227.

It belongs to the anthranilate phosphoribosyltransferase family. In terms of assembly, homodimer. Mg(2+) is required as a cofactor.

It carries out the reaction N-(5-phospho-beta-D-ribosyl)anthranilate + diphosphate = 5-phospho-alpha-D-ribose 1-diphosphate + anthranilate. The protein operates within amino-acid biosynthesis; L-tryptophan biosynthesis; L-tryptophan from chorismate: step 2/5. In terms of biological role, catalyzes the transfer of the phosphoribosyl group of 5-phosphorylribose-1-pyrophosphate (PRPP) to anthranilate to yield N-(5'-phosphoribosyl)-anthranilate (PRA). This Rhodopseudomonas palustris (strain BisB18) protein is Anthranilate phosphoribosyltransferase.